The chain runs to 341 residues: tRNA N6-adenosine threonylcarbamoyltransferase (341 aa).

Fe cation contacts are provided by histidine 111 and histidine 115. Substrate-binding positions include 134–138, aspartate 167, glycine 180, and asparagine 277; that span reads LVSGG. Residue aspartate 305 participates in Fe cation binding.

This sequence belongs to the KAE1 / TsaD family. The cofactor is Fe(2+).

Its subcellular location is the cytoplasm. It catalyses the reaction L-threonylcarbamoyladenylate + adenosine(37) in tRNA = N(6)-L-threonylcarbamoyladenosine(37) in tRNA + AMP + H(+). Its function is as follows. Required for the formation of a threonylcarbamoyl group on adenosine at position 37 (t(6)A37) in tRNAs that read codons beginning with adenine. Is involved in the transfer of the threonylcarbamoyl moiety of threonylcarbamoyl-AMP (TC-AMP) to the N6 group of A37, together with TsaE and TsaB. TsaD likely plays a direct catalytic role in this reaction. In Chromobacterium violaceum (strain ATCC 12472 / DSM 30191 / JCM 1249 / CCUG 213 / NBRC 12614 / NCIMB 9131 / NCTC 9757 / MK), this protein is tRNA N6-adenosine threonylcarbamoyltransferase.